We begin with the raw amino-acid sequence, 139 residues long: NADH dehydrogenase [ubiquinone] 1 alpha subcomplex subunit MCI4 (139 aa).

Belongs to the complex I NDUFA5 subunit family.

Its subcellular location is the mitochondrion inner membrane. Functionally, accessory subunit of the mitochondrial membrane respiratory chain NADH dehydrogenase (Complex I), that is believed not to be involved in catalysis. Complex I functions in the transfer of electrons from NADH to the respiratory chain. The immediate electron acceptor for the enzyme is believed to be ubiquinone. Involved in osmotic and oxidative resistance, yeast to hypha transition and the ability to damage and invade oral epithelial cells. The protein is NADH dehydrogenase [ubiquinone] 1 alpha subcomplex subunit MCI4 of Candida albicans (strain SC5314 / ATCC MYA-2876) (Yeast).